Here is a 63-residue protein sequence, read N- to C-terminus: Bowman-birk type proteinase inhibitor (63 aa).

Intrachain disulfides connect C7/C61, C8/C23, C11/C57, C13/C21, C31/C38, C35/C50, and C40/C48.

Inhibits trypsin, chymotrypsin, plasmin and factor XIIa. Does not inhibit factor Xa, thrombin and plasma kallikrein. This chain is Bowman-birk type proteinase inhibitor, found in Amburana acreana (Cerejeira).